The primary structure comprises 219 residues: Dehydration-responsive element-binding protein 1E (219 aa).

The span at 1-19 (MEWAYYGSGYSSSGTPSPV) shows a compositional bias: low complexity. The tract at residues 1–44 (MEWAYYGSGYSSSGTPSPVGGDGDEDSYMTVSSAPPKRRAGRTK) is disordered. A DNA-binding region (AP2/ERF) is located at residues 52 to 109 (VYKGVRSRNPGRWVCEVREPHGKQRIWLGTFETAEMAARAHDVAAMALRGRAACLNFA).

This sequence belongs to the AP2/ERF transcription factor family. ERF subfamily.

The protein localises to the nucleus. Functionally, transcriptional activator that binds specifically to the DNA sequence 5'-[AG]CCGAC-3'. Binding to the C-repeat/DRE element mediates high salinity- and dehydration-inducible transcription. The polypeptide is Dehydration-responsive element-binding protein 1E (DREB1E) (Oryza sativa subsp. indica (Rice)).